The following is a 234-amino-acid chain: Ras-related protein Rab-20 (234 aa).

The GTP site is built by G17, K18, T19, D32, and T36. T19 lines the Mg(2+) pocket. Short sequence motifs (switch) lie at residues 28 to 41 and 55 to 72; these read RRFPDTVSTVGGAF and DTAGREQFHGLGSMYCRG. T36 and D55 together coordinate Mg(2+). Residues G58, N113, K114, and D116 each contribute to the GTP site. The interval 125-144 is disordered; it reads GQEKEECSPNMDAGDRVSPR. The span at 126-142 shows a compositional bias: basic and acidic residues; the sequence is QEKEECSPNMDAGDRVS. GTP contacts are provided by A184 and K185. Residues 212-234 form a disordered region; it reads RPSHTVDISSHKPPKRTRSGCCA. Residues 223-234 show a composition bias toward basic residues; sequence KPPKRTRSGCCA. S-geranylgeranyl cysteine attachment occurs at residues C232 and C233.

It belongs to the small GTPase superfamily. Rab family. Mg(2+) is required as a cofactor. As to expression, low or absent expression in normal pancreas and stronger expression in 15 of 18 exocrine pancreatic adenocarcinomas (at protein level).

Its subcellular location is the golgi apparatus. The protein resides in the cytoplasmic vesicle. The protein localises to the phagosome. It localises to the phagosome membrane. It carries out the reaction GTP + H2O = GDP + phosphate + H(+). Its activity is regulated as follows. Regulated by guanine nucleotide exchange factors (GEFs) which promote the exchange of bound GDP for free GTP. Regulated by GTPase activating proteins (GAPs) which increase the GTP hydrolysis activity. Inhibited by GDP dissociation inhibitors (GDIs). Functionally, the small GTPases Rab are key regulators of intracellular membrane trafficking, from the formation of transport vesicles to their fusion with membranes. Rabs cycle between an inactive GDP-bound form and an active GTP-bound form that is able to recruit to membranes different sets of downstream effectors directly responsible for vesicle formation, movement, tethering and fusion. RAB20 plays a role in apical endocytosis/recycling. Plays a role in the maturation and acidification of phagosomes that engulf pathogens, such as S.aureus and M.tuberculosis. Plays a role in the fusion of phagosomes with lysosomes. The protein is Ras-related protein Rab-20 of Homo sapiens (Human).